A 113-amino-acid chain; its full sequence is Large ribosomal subunit protein uL22 (113 aa).

It belongs to the universal ribosomal protein uL22 family. As to quaternary structure, part of the 50S ribosomal subunit.

This protein binds specifically to 23S rRNA; its binding is stimulated by other ribosomal proteins, e.g. L4, L17, and L20. It is important during the early stages of 50S assembly. It makes multiple contacts with different domains of the 23S rRNA in the assembled 50S subunit and ribosome. Its function is as follows. The globular domain of the protein is located near the polypeptide exit tunnel on the outside of the subunit, while an extended beta-hairpin is found that lines the wall of the exit tunnel in the center of the 70S ribosome. The chain is Large ribosomal subunit protein uL22 from Xanthomonas axonopodis pv. citri (strain 306).